A 487-amino-acid chain; its full sequence is NGFI-A-binding protein 1 (487 aa).

Positions 4–82 are NCD1; that stretch reads ALPRTLGELQ…RDWVTNPGLF (79 aa). Glycyl lysine isopeptide (Lys-Gly) (interchain with G-Cter in SUMO2) cross-links involve residues lysine 126, lysine 129, and lysine 143. The segment at 162–188 is disordered; the sequence is QGHHATESEHSLSPADLGSPASPKESS. Serine 172 and serine 183 each carry phosphoserine. Residue lysine 212 forms a Glycyl lysine isopeptide (Lys-Gly) (interchain with G-Cter in SUMO2) linkage. The tract at residues 221-310 is NCD2; that stretch reads LLKTNKKLAK…ARQISREVTY (90 aa). Residues 307–338 form a necessary for nuclear localization region; the sequence is EVTYKYTYRTTKSKCGERDELSPKRIKVEDGF. Serine 328 carries the phosphoserine modification. Lysine 333 participates in a covalent cross-link: Glycyl lysine isopeptide (Lys-Gly) (interchain with G-Cter in SUMO1); alternate. Residue lysine 333 forms a Glycyl lysine isopeptide (Lys-Gly) (interchain with G-Cter in SUMO2); alternate linkage. Residues lysine 355, lysine 369, and lysine 373 each participate in a glycyl lysine isopeptide (Lys-Gly) (interchain with G-Cter in SUMO2) cross-link. A disordered region spans residues 399-434; it reads YRQSSEEHSPNGLTSDNSDGQGERPLNLRMPNLQNR. Serine 407 is modified (phosphoserine). The span at 409–418 shows a compositional bias: polar residues; the sequence is NGLTSDNSDG. Glycyl lysine isopeptide (Lys-Gly) (interchain with G-Cter in SUMO2) cross-links involve residues lysine 454, lysine 465, and lysine 477. Lysine 480 participates in a covalent cross-link: Glycyl lysine isopeptide (Lys-Gly) (interchain with G-Cter in SUMO1); alternate. Lysine 480 is covalently cross-linked (Glycyl lysine isopeptide (Lys-Gly) (interchain with G-Cter in SUMO2); alternate).

Belongs to the NAB family. Homomultimers may associate with EGR1 bound to DNA. As to expression, isoform Short is found in myeloid leukemia cell line KG-1.

The protein resides in the nucleus. Acts as a transcriptional repressor for zinc finger transcription factors EGR1 and EGR2. This Homo sapiens (Human) protein is NGFI-A-binding protein 1 (NAB1).